The chain runs to 189 residues: UPF0312 protein VV2_0231 (189 aa).

The N-terminal stretch at Met-1–Ala-22 is a signal peptide.

This sequence belongs to the UPF0312 family. Type 1 subfamily.

Its subcellular location is the periplasm. The sequence is that of UPF0312 protein VV2_0231 from Vibrio vulnificus (strain CMCP6).